The sequence spans 527 residues: Bifunctional purine biosynthesis protein PurH (527 aa).

Residues 1 to 149 (MASDFLPVRR…KNFARVAVAT (149 aa)) form the MGS-like domain.

Belongs to the PurH family.

It carries out the reaction (6R)-10-formyltetrahydrofolate + 5-amino-1-(5-phospho-beta-D-ribosyl)imidazole-4-carboxamide = 5-formamido-1-(5-phospho-D-ribosyl)imidazole-4-carboxamide + (6S)-5,6,7,8-tetrahydrofolate. The catalysed reaction is IMP + H2O = 5-formamido-1-(5-phospho-D-ribosyl)imidazole-4-carboxamide. The protein operates within purine metabolism; IMP biosynthesis via de novo pathway; 5-formamido-1-(5-phospho-D-ribosyl)imidazole-4-carboxamide from 5-amino-1-(5-phospho-D-ribosyl)imidazole-4-carboxamide (10-formyl THF route): step 1/1. It functions in the pathway purine metabolism; IMP biosynthesis via de novo pathway; IMP from 5-formamido-1-(5-phospho-D-ribosyl)imidazole-4-carboxamide: step 1/1. This chain is Bifunctional purine biosynthesis protein PurH, found in Xanthomonas oryzae pv. oryzae (strain PXO99A).